Reading from the N-terminus, the 364-residue chain is D-alanine--D-alanine ligase A (364 aa).

The ATP-grasp domain occupies lysine 145 to glutamate 348. Residue glutamate 175–glutamate 230 participates in ATP binding. Residues aspartate 302, glutamate 315, and asparagine 317 each coordinate Mg(2+).

The protein belongs to the D-alanine--D-alanine ligase family. It depends on Mg(2+) as a cofactor. The cofactor is Mn(2+).

It localises to the cytoplasm. It carries out the reaction 2 D-alanine + ATP = D-alanyl-D-alanine + ADP + phosphate + H(+). The protein operates within cell wall biogenesis; peptidoglycan biosynthesis. Cell wall formation. The sequence is that of D-alanine--D-alanine ligase A (ddlA) from Salmonella typhi.